Reading from the N-terminus, the 450-residue chain is 3-phosphoshikimate 1-carboxyvinyltransferase (450 aa).

3-phosphoshikimate-binding residues include K28, S29, and R33. K28 serves as a coordination point for phosphoenolpyruvate. Positions 100 and 128 each coordinate phosphoenolpyruvate. 4 residues coordinate 3-phosphoshikimate: S173, Q175, D326, and K353. Q175 is a phosphoenolpyruvate binding site. Catalysis depends on D326, which acts as the Proton acceptor. Phosphoenolpyruvate contacts are provided by R357 and R402.

It belongs to the EPSP synthase family. As to quaternary structure, monomer.

It is found in the cytoplasm. The enzyme catalyses 3-phosphoshikimate + phosphoenolpyruvate = 5-O-(1-carboxyvinyl)-3-phosphoshikimate + phosphate. Its pathway is metabolic intermediate biosynthesis; chorismate biosynthesis; chorismate from D-erythrose 4-phosphate and phosphoenolpyruvate: step 6/7. In terms of biological role, catalyzes the transfer of the enolpyruvyl moiety of phosphoenolpyruvate (PEP) to the 5-hydroxyl of shikimate-3-phosphate (S3P) to produce enolpyruvyl shikimate-3-phosphate and inorganic phosphate. This Brucella abortus biovar 1 (strain 9-941) protein is 3-phosphoshikimate 1-carboxyvinyltransferase.